Here is a 393-residue protein sequence, read N- to C-terminus: Protein TsgA (393 aa).

A run of 12 helical transmembrane segments spans residues 11–31 (WISFLSYALTGALVIVTGMVM), 51–71 (FLNAGILISIFLNAWLMEIIP), 78–98 (FGFILMVLAVAGLMFSHSLAL), 101–121 (AAMFVLGLVSGITMSIGTFLI), 134–154 (LLFTDSFFSMAGMIFPMVAAF), 162–182 (WYWVYACIGLVYLAIFILTFG), 206–226 (IGVLFLAVAALCYILGQLGFI), 245–265 (ALVSDFWMSYMFGMWAFSFIL), 273–293 (ILTVLAGMAAVLMYLFITGTQ), 298–318 (WFILTLGFFSSAIYTSIITLG), 332–352 (FILTCGTIGTMLTFVVTGPIV), and 361–381 (LLTANGLYAVVFVMCFALGFV).

It belongs to the major facilitator superfamily. TsgA family.

It is found in the cell inner membrane. The protein is Protein TsgA of Salmonella agona (strain SL483).